Consider the following 1224-residue polypeptide: Integrin alpha pat-2 (1224 aa).

An N-terminal signal peptide occupies residues 1 to 27 (MREGSFPRRTRLLCLLAAVVLISTVTS). Topologically, residues 28–1153 (FNIDTKNVVL…ASEEGRDLPW (1126 aa)) are extracellular. 7 FG-GAP repeats span residues 29-96 (NIDT…TCRE), 110-173 (NGSH…KTEE), 180-235 (EPAR…TDRP), 236-292 (NTEY…MMIN), 293-347 (LTDE…KPQY), 364-423 (GKQL…GVRE), and 427-490 (QKIE…PESA). 4 N-linked (GlcNAc...) asparagine glycosylation sites follow: Asn-74, Asn-110, Asn-230, and Asn-292. The N-linked (GlcNAc...) asparagine glycan is linked to Asn-610. The Cell attachment site motif lies at 622 to 624 (RGD). N-linked (GlcNAc...) asparagine glycosylation is found at Asn-681, Asn-775, and Asn-819. 2 disordered regions span residues 898 to 968 (LRIT…QNTG) and 981 to 1037 (DYEY…KARF). Acidic residues predominate over residues 920–931 (REEDDESYEDET). Basic and acidic residues predominate over residues 955–964 (VYERDEDKIR). Residues 984 to 1003 (YIPDDQEYDGDDFEDDDEDF) show a composition bias toward acidic residues. Over residues 1008–1023 (SKRVKRAPVPKKKKKE) the composition is skewed to basic residues. The segment covering 1024 to 1037 (GSRSGEPRSDKARF) has biased composition (basic and acidic residues). Residues 1154–1174 (WLYLLAILIGLAILILLILLL) traverse the membrane as a helical segment. The Cytoplasmic segment spans residues 1175-1224 (WRCGFFKRNRPPTEHAELRAEKQPAAHYADTQSRYAPQDQYSQGRHGQML). Positions 1190-1224 (AELRAEKQPAAHYADTQSRYAPQDQYSQGRHGQML) are disordered. Residues 1204–1224 (DTQSRYAPQDQYSQGRHGQML) are compositionally biased toward polar residues.

This sequence belongs to the integrin alpha chain family. In terms of assembly, heterodimer of an alpha and a beta subunit. Alpha pat-2 associates with beta pat-3.

It is found in the membrane. Functionally, required for muscle development probably through the regulation of the actin-myosin cytoskeleton. During the formation of neuromuscular junctions at the larval stage, negatively regulates membrane protrusion from body wall muscles, probably through lamins such as epi-1, lam-2 and unc-52. Required for distal tip cell migration and dorsal pathfinding. Required for egg-laying. May play a role in cell motility and cell-cell interactions. This is Integrin alpha pat-2 from Caenorhabditis briggsae.